The following is a 129-amino-acid chain: Integration host factor subunit alpha (129 aa).

Residues 87-129 (SALNGEAPPEDHAEIDAREEAAADAAEARGEDFDEEGMEDMEG) form a disordered region. Basic and acidic residues predominate over residues 95–117 (PEDHAEIDAREEAAADAAEARGE). The span at 118-129 (DFDEEGMEDMEG) shows a compositional bias: acidic residues.

It belongs to the bacterial histone-like protein family. Heterodimer of an alpha and a beta chain.

This protein is one of the two subunits of integration host factor, a specific DNA-binding protein that functions in genetic recombination as well as in transcriptional and translational control. It is necessary for normal cell growth and the production of carotenoids in response to light. This is Integration host factor subunit alpha (ihfA) from Myxococcus xanthus.